Reading from the N-terminus, the 310-residue chain is Porphobilinogen deaminase (310 aa).

Cys-242 is subject to S-(dipyrrolylmethanemethyl)cysteine.

It belongs to the HMBS family. In terms of assembly, monomer. Dipyrromethane is required as a cofactor.

The catalysed reaction is 4 porphobilinogen + H2O = hydroxymethylbilane + 4 NH4(+). It participates in porphyrin-containing compound metabolism; protoporphyrin-IX biosynthesis; coproporphyrinogen-III from 5-aminolevulinate: step 2/4. Its function is as follows. Tetrapolymerization of the monopyrrole PBG into the hydroxymethylbilane pre-uroporphyrinogen in several discrete steps. This chain is Porphobilinogen deaminase, found in Shewanella oneidensis (strain ATCC 700550 / JCM 31522 / CIP 106686 / LMG 19005 / NCIMB 14063 / MR-1).